A 371-amino-acid polypeptide reads, in one-letter code: UDP-N-acetylglucosamine--N-acetylmuramyl-(pentapeptide) pyrophosphoryl-undecaprenol N-acetylglucosamine transferase (371 aa).

UDP-N-acetyl-alpha-D-glucosamine is bound by residues 10 to 12 (TGG), asparagine 124, arginine 166, serine 196, and glutamine 301.

Belongs to the glycosyltransferase 28 family. MurG subfamily.

The protein resides in the cell membrane. The enzyme catalyses di-trans,octa-cis-undecaprenyl diphospho-N-acetyl-alpha-D-muramoyl-L-alanyl-D-glutamyl-meso-2,6-diaminopimeloyl-D-alanyl-D-alanine + UDP-N-acetyl-alpha-D-glucosamine = di-trans,octa-cis-undecaprenyl diphospho-[N-acetyl-alpha-D-glucosaminyl-(1-&gt;4)]-N-acetyl-alpha-D-muramoyl-L-alanyl-D-glutamyl-meso-2,6-diaminopimeloyl-D-alanyl-D-alanine + UDP + H(+). The protein operates within cell wall biogenesis; peptidoglycan biosynthesis. Cell wall formation. Catalyzes the transfer of a GlcNAc subunit on undecaprenyl-pyrophosphoryl-MurNAc-pentapeptide (lipid intermediate I) to form undecaprenyl-pyrophosphoryl-MurNAc-(pentapeptide)GlcNAc (lipid intermediate II). This chain is UDP-N-acetylglucosamine--N-acetylmuramyl-(pentapeptide) pyrophosphoryl-undecaprenol N-acetylglucosamine transferase, found in Moorella thermoacetica (strain ATCC 39073 / JCM 9320).